The primary structure comprises 184 residues: Peptide deformylase (184 aa).

The Fe cation site is built by cysteine 111 and histidine 154. Glutamate 155 is a catalytic residue. Fe cation is bound at residue histidine 158.

It belongs to the polypeptide deformylase family. Fe(2+) is required as a cofactor.

The catalysed reaction is N-terminal N-formyl-L-methionyl-[peptide] + H2O = N-terminal L-methionyl-[peptide] + formate. In terms of biological role, removes the formyl group from the N-terminal Met of newly synthesized proteins. Requires at least a dipeptide for an efficient rate of reaction. N-terminal L-methionine is a prerequisite for activity but the enzyme has broad specificity at other positions. The sequence is that of Peptide deformylase from Lactobacillus helveticus (strain DPC 4571).